Reading from the N-terminus, the 238-residue chain is MGQKVNPIGMRLQVNRTWDSRWFAESKDYGNLLLEDLKMREFIHDYAKQAGVSKVIIERPHRKCRVTIHTARPGVIIGKKGADIETLRKKLAAFTKSELHLNIVEIRKPELDAQLVAESIAQQMERRVSFRRAMKRGVQNAMRIGALGIRVNVAGRLGGAEIARTEWYREGRVPLHTLRADIDYATSEASTPYGIIGVKVWIFKGEILEHDPQAHDRRHSEAQEGAAPRPPRRDRERA.

Residues 39-107 enclose the KH type-2 domain; it reads MREFIHDYAK…ELHLNIVEIR (69 aa). The segment covering 212–222 has biased composition (basic and acidic residues); sequence PQAHDRRHSEA. A disordered region spans residues 212-238; sequence PQAHDRRHSEAQEGAAPRPPRRDRERA.

Belongs to the universal ribosomal protein uS3 family. In terms of assembly, part of the 30S ribosomal subunit. Forms a tight complex with proteins S10 and S14.

Binds the lower part of the 30S subunit head. Binds mRNA in the 70S ribosome, positioning it for translation. The polypeptide is Small ribosomal subunit protein uS3 (Cereibacter sphaeroides (strain ATCC 17025 / ATH 2.4.3) (Rhodobacter sphaeroides)).